We begin with the raw amino-acid sequence, 267 residues long: 5'-nucleotidase SurE (267 aa).

Positions 9, 10, 40, and 97 each coordinate a divalent metal cation.

It belongs to the SurE nucleotidase family. A divalent metal cation is required as a cofactor.

The protein resides in the cytoplasm. The catalysed reaction is a ribonucleoside 5'-phosphate + H2O = a ribonucleoside + phosphate. In terms of biological role, nucleotidase that shows phosphatase activity on nucleoside 5'-monophosphates. In Helicobacter pylori (strain HPAG1), this protein is 5'-nucleotidase SurE.